Reading from the N-terminus, the 216-residue chain is Peroxiredoxin (216 aa).

One can recognise a Thioredoxin domain in the interval Val2 to Val158. Cys46 (cysteine sulfenic acid (-SOH) intermediate) is an active-site residue. Arg121 provides a ligand contact to substrate. Cys205 and Cys211 are joined by a disulfide.

This sequence belongs to the peroxiredoxin family. Prx6 subfamily. Homodecamer. Pentamer of dimers that assemble into a ring structure.

It is found in the cytoplasm. The enzyme catalyses a hydroperoxide + [thioredoxin]-dithiol = an alcohol + [thioredoxin]-disulfide + H2O. Its function is as follows. Thiol-specific peroxidase that catalyzes the reduction of hydrogen peroxide and organic hydroperoxides to water and alcohols, respectively. Plays a role in cell protection against oxidative stress by detoxifying peroxides. This chain is Peroxiredoxin, found in Thermococcus kodakarensis (strain ATCC BAA-918 / JCM 12380 / KOD1) (Pyrococcus kodakaraensis (strain KOD1)).